A 159-amino-acid polypeptide reads, in one-letter code: Small ribosomal subunit protein uS17 (159 aa).

Belongs to the universal ribosomal protein uS17 family.

The protein resides in the cytoplasm. The sequence is that of Small ribosomal subunit protein uS17 (RPS11) from Zea mays (Maize).